Here is a 271-residue protein sequence, read N- to C-terminus: Type III pantothenate kinase (271 aa).

6–13 is a binding site for ATP; that stretch reads DVRNTHTV. Substrate is bound at residue 109-112; that stretch reads GADR. Aspartate 111 serves as the catalytic Proton acceptor. Aspartate 131 is a K(+) binding site. Position 134 (serine 134) interacts with ATP. Threonine 186 provides a ligand contact to substrate.

Belongs to the type III pantothenate kinase family. As to quaternary structure, homodimer. The cofactor is NH4(+). It depends on K(+) as a cofactor.

The protein resides in the cytoplasm. The enzyme catalyses (R)-pantothenate + ATP = (R)-4'-phosphopantothenate + ADP + H(+). It participates in cofactor biosynthesis; coenzyme A biosynthesis; CoA from (R)-pantothenate: step 1/5. In terms of biological role, catalyzes the phosphorylation of pantothenate (Pan), the first step in CoA biosynthesis. This chain is Type III pantothenate kinase, found in Mycolicibacterium smegmatis (strain ATCC 700084 / mc(2)155) (Mycobacterium smegmatis).